Reading from the N-terminus, the 151-residue chain is uncharacterized protein (151 aa).

A disordered region spans residues 123–151; that stretch reads PAGQNAGTGPAQKLKTDETRCYERRGGSQ. The span at 136-151 shows a compositional bias: basic and acidic residues; the sequence is LKTDETRCYERRGGSQ.

This is an uncharacterized protein from Triticum aestivum (Wheat).